The following is a 627-amino-acid chain: Phosphomethylpyrimidine synthase (627 aa).

Substrate-binding positions include Asn233, Met262, Tyr291, His327, 347 to 349 (SRG), 388 to 391 (DGLR), and Glu427. His431 is a Zn(2+) binding site. A substrate-binding site is contributed by Tyr454. His495 provides a ligand contact to Zn(2+). [4Fe-4S] cluster is bound by residues Cys575, Cys578, and Cys583.

Belongs to the ThiC family. As to quaternary structure, homodimer. [4Fe-4S] cluster is required as a cofactor.

The catalysed reaction is 5-amino-1-(5-phospho-beta-D-ribosyl)imidazole + S-adenosyl-L-methionine = 4-amino-2-methyl-5-(phosphooxymethyl)pyrimidine + CO + 5'-deoxyadenosine + formate + L-methionine + 3 H(+). It participates in cofactor biosynthesis; thiamine diphosphate biosynthesis. In terms of biological role, catalyzes the synthesis of the hydroxymethylpyrimidine phosphate (HMP-P) moiety of thiamine from aminoimidazole ribotide (AIR) in a radical S-adenosyl-L-methionine (SAM)-dependent reaction. This is Phosphomethylpyrimidine synthase from Acidithiobacillus ferrooxidans (strain ATCC 23270 / DSM 14882 / CIP 104768 / NCIMB 8455) (Ferrobacillus ferrooxidans (strain ATCC 23270)).